A 399-amino-acid chain; its full sequence is MIGISKLYCGTVEPSDALRYGRDSKKLPSHLLQFSKDKKPVVVWNMTRRCNLKCVHCYAQAKDIEFENELSTEEGKALIDDLASFGSPVILFSGGEPTMRKDLPELAAYAREKGMRAVISTNGTLIDREMAKKLKEVGLSYVGVSLDGIRETNDKFRGMKGAFDAALRGLHNCQEEGIKVGLRFTINKQNVRDIPAIFDLLEEEKIPRICFYHLVYAGRGSKMVNEDLSLEESRQAVDLILERTRKLHEKGFPAEVLTVDNHCDGPYLYMKLLKENPERAAEVFELLSMNQGNSSGIGIGCVSWDGAVHADQFWRHYSFGNVRERPFSEIWTDLSDELMAGLKNRKPLIKAHADRCARCKWLDVCNGNFRVRAEAVYGNVWADDPACYLTKEEIGYYEA.

Residues 36-253 enclose the Radical SAM core domain; that stretch reads KDKKPVVVWN…TRKLHEKGFP (218 aa). [4Fe-4S] cluster-binding residues include cysteine 50, cysteine 54, and cysteine 57.

This sequence belongs to the radical SAM superfamily. The cofactor is [4Fe-4S] cluster.

The enzyme catalyses 12,18-didecarboxysiroheme + 2 AH2 + 2 S-adenosyl-L-methionine = Fe-coproporphyrin III + 2 5'-deoxyadenosine + 2 L-methionine + 2 acetate + 2 A + 2 H(+). It functions in the pathway porphyrin-containing compound metabolism; protoheme biosynthesis. Its function is as follows. Involved in siroheme-dependent heme b biosynthesis. Catalyzes the conversion of didecarboxysiroheme into Fe-coproporphyrin III by oxidative loss of two acetic acid side chains. This chain is Fe-coproporphyrin III synthase, found in Methanosarcina barkeri (strain Fusaro / DSM 804).